Consider the following 259-residue polypeptide: MLTVRIIPCLDVNKGRVVKGVNFLNLVDAGDPVELAAFYDREGADEVVFLDITASFEGRQTMVEVAKRTATTLSIPFTIGGGIRNIDDIRALLASGADKVSINSAAVKNPELVREAALKFGSQCIVVAIDAKRKKDGGFEVYIHGGRTPTGIDAVEWAKEVERLGAGEILLTSMDRDGTKDGYDLELTREIADAVKIPVIASGGVGELSHFYEGVVLGHASALLAASVFHFGKFTIKEVKRYLKERGIPVRLGDTENGT.

Residues Asp11 and Asp130 contribute to the active site.

It belongs to the HisA/HisF family. In terms of assembly, heterodimer of HisH and HisF.

The protein resides in the cytoplasm. The catalysed reaction is 5-[(5-phospho-1-deoxy-D-ribulos-1-ylimino)methylamino]-1-(5-phospho-beta-D-ribosyl)imidazole-4-carboxamide + L-glutamine = D-erythro-1-(imidazol-4-yl)glycerol 3-phosphate + 5-amino-1-(5-phospho-beta-D-ribosyl)imidazole-4-carboxamide + L-glutamate + H(+). Its pathway is amino-acid biosynthesis; L-histidine biosynthesis; L-histidine from 5-phospho-alpha-D-ribose 1-diphosphate: step 5/9. In terms of biological role, IGPS catalyzes the conversion of PRFAR and glutamine to IGP, AICAR and glutamate. The HisF subunit catalyzes the cyclization activity that produces IGP and AICAR from PRFAR using the ammonia provided by the HisH subunit. In Carboxydothermus hydrogenoformans (strain ATCC BAA-161 / DSM 6008 / Z-2901), this protein is Imidazole glycerol phosphate synthase subunit HisF.